Here is a 149-residue protein sequence, read N- to C-terminus: 3-dehydroquinate dehydratase (149 aa).

Catalysis depends on Tyr-26, which acts as the Proton acceptor. Residues Asn-77, His-83, and Asp-90 each contribute to the substrate site. Residue His-103 is the Proton donor of the active site. Substrate is bound by residues 104–105 (LS) and Arg-114.

It belongs to the type-II 3-dehydroquinase family. In terms of assembly, homododecamer.

The enzyme catalyses 3-dehydroquinate = 3-dehydroshikimate + H2O. It participates in metabolic intermediate biosynthesis; chorismate biosynthesis; chorismate from D-erythrose 4-phosphate and phosphoenolpyruvate: step 3/7. In terms of biological role, catalyzes a trans-dehydration via an enolate intermediate. This chain is 3-dehydroquinate dehydratase (aroQ), found in Haemophilus influenzae (strain ATCC 51907 / DSM 11121 / KW20 / Rd).